The primary structure comprises 331 residues: Probable serine hydrolase (331 aa).

Residues Met1–Glu28 are disordered. A compositionally biased stretch (low complexity) spans Ala7–Ala17. The AB hydrolase-1 domain occupies Pro63–Ile163. Ser138 is an active-site residue.

It belongs to the AB hydrolase superfamily. As to expression, ubiquitously expressed before embryonic stage 11. At stage 11, expression is concentrated in the foregut and posterior midgut. By stage 15, in gastric caeca, pharynx, posterior spiracles and anterior edge of midgut. At the end of embryogenesis, expression is confined to gastric caeca. During third instar larvae, expressed at low levels in gastric caeca, midgut and hindgut and high level in fat body.

Functionally, may have a role in detoxification and digestion during embryogenesis and larval development. This Drosophila melanogaster (Fruit fly) protein is Probable serine hydrolase (kraken).